Reading from the N-terminus, the 902-residue chain is HTH-type transcriptional regulator MalT (902 aa).

Residue 39-46 participates in ATP binding; that stretch reads SPAGYGKT. The region spanning 832 to 897 is the HTH luxR-type domain; that stretch reads ELVRTSPLTQ…EAIVTAENLL (66 aa). Positions 856 to 875 form a DNA-binding region, H-T-H motif; sequence NEQIAQELDVAGTTIKTHIR.

The protein belongs to the MalT family. In terms of assembly, monomer in solution. Oligomerizes to an active state in the presence of the positive effectors ATP and maltotriose.

With respect to regulation, activated by ATP and maltotriose, which are both required for DNA binding. In terms of biological role, positively regulates the transcription of the maltose regulon whose gene products are responsible for uptake and catabolism of malto-oligosaccharides. Specifically binds to the promoter region of its target genes, recognizing a short DNA motif called the MalT box. The sequence is that of HTH-type transcriptional regulator MalT from Vibrio parahaemolyticus serotype O3:K6 (strain RIMD 2210633).